The sequence spans 150 residues: Large ribosomal subunit protein bL9 (150 aa).

The protein belongs to the bacterial ribosomal protein bL9 family.

Its function is as follows. Binds to the 23S rRNA. This is Large ribosomal subunit protein bL9 from Pectobacterium atrosepticum (strain SCRI 1043 / ATCC BAA-672) (Erwinia carotovora subsp. atroseptica).